The following is a 66-amino-acid chain: Small archaeal modifier protein 2 (66 aa).

A Glycyl lysine isopeptide (Lys-Gly) (interchain with G-Cter in SAMP2) cross-link involves residue lysine 58. Glycine 66 is subject to 1-thioglycine; alternate. The residue at position 66 (glycine 66) is a Glycyl adenylate; alternate. A Glycyl lysine isopeptide (Gly-Lys) (interchain with K-? in acceptor proteins); alternate cross-link involves residue glycine 66.

As to quaternary structure, monomer. Monomeric and polymeric forms interact with NcsA. Post-translationally, the C-terminal glycine is likely acyl-adenylated (-COAMP) by UbaA, and also probably thiocarboxylated (-COSH) to function in sulfur transfer.

Functions as a protein modifier covalently attached to lysine residues of substrate proteins, as well as a sulfur carrier in tRNA thiolation. The protein modification process is termed sampylation and involves the formation of an isopeptide bond between the SAMP2 C-terminal glycine carboxylate and the epsilon-amino group of lysine residues on target proteins. Is able to form polymeric chains with itself at Lys-58, similar to ubiquitin and other ubiquitin-like proteins. May serve as a proteolytic signal in the cell to target proteins for degradation by proteasomes. The polypeptide is Small archaeal modifier protein 2 (samp2) (Haloferax volcanii (strain ATCC 29605 / DSM 3757 / JCM 8879 / NBRC 14742 / NCIMB 2012 / VKM B-1768 / DS2) (Halobacterium volcanii)).